A 427-amino-acid chain; its full sequence is Diaminobutyrate--2-oxoglutarate transaminase (427 aa).

Lysine 269 carries the N6-(pyridoxal phosphate)lysine modification.

It belongs to the class-III pyridoxal-phosphate-dependent aminotransferase family. It depends on pyridoxal 5'-phosphate as a cofactor.

It catalyses the reaction L-2,4-diaminobutanoate + 2-oxoglutarate = L-aspartate 4-semialdehyde + L-glutamate. It functions in the pathway amine and polyamine biosynthesis; ectoine biosynthesis; L-ectoine from L-aspartate 4-semialdehyde: step 1/3. Catalyzes reversively the conversion of L-aspartate beta-semialdehyde (ASA) to L-2,4-diaminobutyrate (DABA) by transamination with L-glutamate. This chain is Diaminobutyrate--2-oxoglutarate transaminase (ectB), found in Marinococcus halophilus.